The primary structure comprises 281 residues: Phosphonates import ATP-binding protein PhnC (281 aa).

The ABC transporter domain occupies 2–245 (FELKDVTRRF…AVKEIYGTDK (244 aa)). 34–41 (GRSGAGKS) contributes to the ATP binding site.

It belongs to the ABC transporter superfamily. Phosphonates importer (TC 3.A.1.9.1) family. The complex is composed of two ATP-binding proteins (PhnC), two transmembrane proteins (PhnE) and a solute-binding protein (PhnD).

The protein localises to the cell inner membrane. The enzyme catalyses phosphonate(out) + ATP + H2O = phosphonate(in) + ADP + phosphate + H(+). Its function is as follows. Part of the ABC transporter complex PhnCDE involved in phosphonates import. Responsible for energy coupling to the transport system. This is Phosphonates import ATP-binding protein PhnC from Rhizobium etli (strain ATCC 51251 / DSM 11541 / JCM 21823 / NBRC 15573 / CFN 42).